Reading from the N-terminus, the 735-residue chain is Protostadienol synthase helA (735 aa).

One copy of the PFTB 1 repeat lies at 132-173 (KQEMCRYLLNVVNEDGGWGLFIQSPSTVFGTVMNYCMLRILG). The active-site Proton donor is D463. 3 PFTB repeats span residues 490–531 (LQQA…YENV), 567–607 (LSRS…ACMG), and 616–663 (CQRA…AVIG).

Belongs to the terpene cyclase/mutase family.

It catalyses the reaction (S)-2,3-epoxysqualene = (17Z)-protosta-17(20),24-dien-3beta-ol. It functions in the pathway mycotoxin biosynthesis. Functionally, protostadienol synthase; part of the gene cluster that mediates the biosynthesis of helvolic acid, an antibacterial nortriterpenoid. Protostadienol synthase helA cyclizes (3S)-oxidosqualene to (17Z)-protosta-17(20),24-dien-3-beta-ol (protostadienol). The synthesis of protostadienol is followed by several steps of monooxygenation, dehydrogenation, and acyl transfer to yield the final helvolic acid. Following the cyclization to the tetracyclic protostadienol by helA, cytochrome P450 monooxygenases helB1-mediated and helB2-mediated oxidation at C-4 and C-16, acyltransferase helD2-dependent acetylation of 16-OH, oxidation of C-21 by cytochrome P450 monooxygenase helB4, and short chain dehydrogenase helC-dependent oxidative decarboxylation yield the fusidane skeleton. This intermediate is further modified in three additional steps mediated by the cytochrome P450 monooxygenase helB3, the acyltransferase helD1, and the 3-ketosteroid 1-dehydrogenase helE to give helvolic acid. Compared with the late stages in the biosynthesis of helvolic acid, enzymes involved in the early stage modifications act in a relatively strict order. The hydroxylation of C-16 by helB1 and subsequent acetylation by helD2 should occur before the helB3-mediated oxidation of C-21. C-4 demethylation in fusidane-type antibiotics proceeds in an unusual manner though it is also achieved by oxidative decarboxylation. The methyl group at C-4 beta position is oxidized by helB1 and subsequently removed by the short chain dehydrogenase helC. The polypeptide is Protostadienol synthase helA (Aspergillus fumigatus (strain ATCC MYA-4609 / CBS 101355 / FGSC A1100 / Af293) (Neosartorya fumigata)).